The primary structure comprises 205 residues: Probable GTP-binding protein EngB (205 aa).

An EngB-type G domain is found at 27 to 201 (TGIEIAFAGR…AAKLDFWFSP (175 aa)). GTP-binding positions include 35–42 (GRSNAGKS), 62–66 (GRTQL), 80–83 (DLPG), 147–150 (TKAD), and 180–182 (FSA). Positions 42 and 64 each coordinate Mg(2+).

This sequence belongs to the TRAFAC class TrmE-Era-EngA-EngB-Septin-like GTPase superfamily. EngB GTPase family. Mg(2+) is required as a cofactor.

In terms of biological role, necessary for normal cell division and for the maintenance of normal septation. The polypeptide is Probable GTP-binding protein EngB (Haemophilus influenzae (strain 86-028NP)).